Consider the following 110-residue polypeptide: Large ribosomal subunit protein uL22 (110 aa).

It belongs to the universal ribosomal protein uL22 family. As to quaternary structure, part of the 50S ribosomal subunit.

Functionally, this protein binds specifically to 23S rRNA; its binding is stimulated by other ribosomal proteins, e.g. L4, L17, and L20. It is important during the early stages of 50S assembly. It makes multiple contacts with different domains of the 23S rRNA in the assembled 50S subunit and ribosome. The globular domain of the protein is located near the polypeptide exit tunnel on the outside of the subunit, while an extended beta-hairpin is found that lines the wall of the exit tunnel in the center of the 70S ribosome. This is Large ribosomal subunit protein uL22 from Shewanella frigidimarina (strain NCIMB 400).